A 200-amino-acid polypeptide reads, in one-letter code: Large ribosomal subunit protein bL25 (200 aa).

It belongs to the bacterial ribosomal protein bL25 family. CTC subfamily. As to quaternary structure, part of the 50S ribosomal subunit; part of the 5S rRNA/L5/L18/L25 subcomplex. Contacts the 5S rRNA. Binds to the 5S rRNA independently of L5 and L18.

Its function is as follows. This is one of the proteins that binds to the 5S RNA in the ribosome where it forms part of the central protuberance. The polypeptide is Large ribosomal subunit protein bL25 (Leifsonia xyli subsp. xyli (strain CTCB07)).